The sequence spans 185 residues: Ribosome-recycling factor (185 aa).

Belongs to the RRF family.

It is found in the cytoplasm. Its function is as follows. Responsible for the release of ribosomes from messenger RNA at the termination of protein biosynthesis. May increase the efficiency of translation by recycling ribosomes from one round of translation to another. This Corynebacterium aurimucosum (strain ATCC 700975 / DSM 44827 / CIP 107346 / CN-1) (Corynebacterium nigricans) protein is Ribosome-recycling factor.